The chain runs to 502 residues: CBL-interacting protein kinase 11 (502 aa).

The Protein kinase domain maps to Tyr12–Tyr267. Residues Leu18–Val26 and Lys41 contribute to the ATP site. The active-site Proton acceptor is the Asp135. Residues Asp153–Glu182 are activation loop. The 37-residue stretch at Ala297 to Glu333 folds into the NAF domain. Residues Gln339–Val367 form a PPI region. Residues Leu447–Asn502 form a disordered region. Residues Pro461 to Gln472 are compositionally biased toward low complexity. Residues Thr493–Asn502 are compositionally biased toward polar residues.

The protein belongs to the protein kinase superfamily. CAMK Ser/Thr protein kinase family. SNF1 subfamily. It depends on Mn(2+) as a cofactor.

The enzyme catalyses L-seryl-[protein] + ATP = O-phospho-L-seryl-[protein] + ADP + H(+). The catalysed reaction is L-threonyl-[protein] + ATP = O-phospho-L-threonyl-[protein] + ADP + H(+). In terms of biological role, CIPK serine-threonine protein kinases interact with CBL proteins. Binding of a CBL protein to the regulatory NAF domain of CIPK protein lead to the activation of the kinase in a calcium-dependent manner. In Oryza sativa subsp. japonica (Rice), this protein is CBL-interacting protein kinase 11 (CIPK11).